Here is a 162-residue protein sequence, read N- to C-terminus: Ribonuclease H (162 aa).

An RNase H type-1 domain is found at 6–154 (DMKRVEIFTD…ADRLANQGVE (149 aa)). 4 residues coordinate Mg(2+): D15, E53, D82, and D146.

Belongs to the RNase H family. In terms of assembly, monomer. The cofactor is Mg(2+).

The protein localises to the cytoplasm. The catalysed reaction is Endonucleolytic cleavage to 5'-phosphomonoester.. In terms of biological role, endonuclease that specifically degrades the RNA of RNA-DNA hybrids. The sequence is that of Ribonuclease H from Nitrosomonas eutropha (strain DSM 101675 / C91 / Nm57).